Here is a 296-residue protein sequence, read N- to C-terminus: Phosphatidylserine decarboxylase proenzyme (296 aa).

Active-site charge relay system; for autoendoproteolytic cleavage activity residues include Asp-113, His-169, and Ser-256. Catalysis depends on Ser-256, which acts as the Schiff-base intermediate with substrate; via pyruvic acid; for decarboxylase activity. Ser-256 is subject to Pyruvic acid (Ser); by autocatalysis.

This sequence belongs to the phosphatidylserine decarboxylase family. PSD-B subfamily. Prokaryotic type II sub-subfamily. As to quaternary structure, heterodimer of a large membrane-associated beta subunit and a small pyruvoyl-containing alpha subunit. It depends on pyruvate as a cofactor. In terms of processing, is synthesized initially as an inactive proenzyme. Formation of the active enzyme involves a self-maturation process in which the active site pyruvoyl group is generated from an internal serine residue via an autocatalytic post-translational modification. Two non-identical subunits are generated from the proenzyme in this reaction, and the pyruvate is formed at the N-terminus of the alpha chain, which is derived from the carboxyl end of the proenzyme. The autoendoproteolytic cleavage occurs by a canonical serine protease mechanism, in which the side chain hydroxyl group of the serine supplies its oxygen atom to form the C-terminus of the beta chain, while the remainder of the serine residue undergoes an oxidative deamination to produce ammonia and the pyruvoyl prosthetic group on the alpha chain. During this reaction, the Ser that is part of the protease active site of the proenzyme becomes the pyruvoyl prosthetic group, which constitutes an essential element of the active site of the mature decarboxylase.

It localises to the cell membrane. The catalysed reaction is a 1,2-diacyl-sn-glycero-3-phospho-L-serine + H(+) = a 1,2-diacyl-sn-glycero-3-phosphoethanolamine + CO2. It participates in phospholipid metabolism; phosphatidylethanolamine biosynthesis; phosphatidylethanolamine from CDP-diacylglycerol: step 2/2. Its function is as follows. Catalyzes the formation of phosphatidylethanolamine (PtdEtn) from phosphatidylserine (PtdSer). The polypeptide is Phosphatidylserine decarboxylase proenzyme (Clostridium kluyveri (strain ATCC 8527 / DSM 555 / NBRC 12016 / NCIMB 10680 / K1)).